The primary structure comprises 360 residues: UDP-arabinopyranose mutase 2 (360 aa).

An N-acetylvaline modification is found at valine 2. The short motif at aspartate 110–aspartate 112 is the DXD motif element. Arginine 158 carries N-linked (Glc...) arginine glycosylation.

It belongs to the RGP family. Heteromers with RGP1, RGP4 and RGP5. Mn(2+) serves as cofactor. Mg(2+) is required as a cofactor. In terms of processing, reversibly glycosylated in vitro by UDP-glucose, UDP-xylose and UDP-galactose, but not UDP-mannose. As to expression, predominantly expressed in shoot and root apical meristems. Expressed in epidermal cells of leaves, inflorescence stems and seed coat. Expressed in pollen.

The protein resides in the cytoplasm. Its subcellular location is the cytosol. The protein localises to the golgi apparatus. It catalyses the reaction UDP-beta-L-arabinofuranose = UDP-beta-L-arabinopyranose. In terms of biological role, UDP-L-arabinose mutase involved in the biosynthesis of cell wall non-cellulosic polysaccharides. Catalyzes the interconvertion of UDP-L-arabinopyranose (UDP-Arap) and UDP-L-arabinofuranose (UDP-Araf) in vitro. Preferentially catalyzes the formation of UDP-Arap from UDP-Araf. At thermodynamic equilibrium in vitro the ratio of the pyranose form over the furanose form is 95:5. Is not active on other UDP-sugars (UDP-Gal, UDP-Xyl, UDP-Glc, GDP-Man and GDP-Fuc). Functions redundantly with RGP2 and is essential for proper cell walls and pollen development. Probably involved in the formation of the pectocellulosic cell wall layer intine. Is probably active as heteromer in vivo. The sequence is that of UDP-arabinopyranose mutase 2 from Arabidopsis thaliana (Mouse-ear cress).